We begin with the raw amino-acid sequence, 519 residues long: Probable pectinesterase/pectinesterase inhibitor 36 (519 aa).

The N-terminal stretch at 1-25 (MSTFVKVTDLITIMFFLAIAAVITA) is a signal peptide. Positions 27-141 (NTAELDVLEM…TFVLHEALAF (115 aa)) are pectinesterase inhibitor 36. 2 N-linked (GlcNAc...) asparagine glycosylation sites follow: asparagine 92 and asparagine 130. The segment at 147–196 (GHMKKRLHGPARQGHGPTRPKHRPTRPNHGPGRSHHGPSRPNQNGGMLVS) is disordered. The segment covering 164-184 (TRPKHRPTRPNHGPGRSHHGP) has biased composition (basic residues). Residues 186-196 (RPNQNGGMLVS) show a composition bias toward polar residues. The tract at residues 205-505 (DFVVARDGSA…FTVSRFIQGD (301 aa)) is pectinesterase 36. Substrate contacts are provided by threonine 283 and glutamine 313. Residue aspartate 336 is the Proton donor; for pectinesterase activity of the active site. Catalysis depends on aspartate 357, which acts as the Nucleophile; for pectinesterase activity. The substrate site is built by arginine 425 and tryptophan 427.

The protein in the N-terminal section; belongs to the PMEI family. In the C-terminal section; belongs to the pectinesterase family. In terms of tissue distribution, expressed in siliques.

It localises to the secreted. It is found in the cell wall. The catalysed reaction is [(1-&gt;4)-alpha-D-galacturonosyl methyl ester](n) + n H2O = [(1-&gt;4)-alpha-D-galacturonosyl](n) + n methanol + n H(+). It participates in glycan metabolism; pectin degradation; 2-dehydro-3-deoxy-D-gluconate from pectin: step 1/5. In terms of biological role, acts in the modification of cell walls via demethylesterification of cell wall pectin. The polypeptide is Probable pectinesterase/pectinesterase inhibitor 36 (PME36) (Arabidopsis thaliana (Mouse-ear cress)).